The following is a 346-amino-acid chain: Protein tas (346 aa).

Residue Tyr-53 is the Proton donor of the active site. Residue 234 to 244 (SCLGFGTLTGK) participates in NADP(+) binding.

The protein belongs to the aldo/keto reductase family. Aldo/keto reductase 2 subfamily.

In Escherichia coli (strain K12), this protein is Protein tas (tas).